A 360-amino-acid chain; its full sequence is METSNRKLDHLRITLLEDVEAGDTWLDFVKVPHRAVPELNLEEVVTEIEVFGKKLSAPLIVTGMTGGNEHAAKINAVIAEVVEELGLGMGVGSQRAAVERPELEWTFRIARERAPNALLIANLGAPQLLKGYGLEEIKKAIDMIDADAIAIHLNAAQESFQPEGDVDYKGLLNKLSELVDKVEKPIIIKETGAGLDYESVKALRELGIKAFDVSGSGGTSWVRVEMYRAREKGDEVLATVADWMSSWGIPTAASIMEARAAAPDALVIASGGIRDGLHAVKSLALGADLVGVALPALKAAYEGKEELKKFLKSMMLSIKIGLFLTGSPAPEHIKGKAIVLGPLKEWALERGIYEEWLRAR.

Residue 6-7 coordinates substrate; the sequence is RK. FMN is bound by residues Thr-62, 63–65, Ser-93, and Asn-122; that span reads GMT. Residue 93-95 participates in substrate binding; it reads SQR. Gln-157 is a binding site for substrate. Glu-158 contributes to the Mg(2+) binding site. Residues Lys-189, Ser-214, Thr-219, 272 to 274, and 293 to 294 each bind FMN; these read GIR and AL.

The protein belongs to the IPP isomerase type 2 family. As to quaternary structure, homooctamer. Dimer of tetramers. The cofactor is FMN. Requires NADPH as cofactor. It depends on Mg(2+) as a cofactor.

It localises to the cytoplasm. It catalyses the reaction isopentenyl diphosphate = dimethylallyl diphosphate. Its function is as follows. Involved in the biosynthesis of isoprenoids. Catalyzes the 1,3-allylic rearrangement of the homoallylic substrate isopentenyl (IPP) to its allylic isomer, dimethylallyl diphosphate (DMAPP). This chain is Isopentenyl-diphosphate delta-isomerase, found in Ignicoccus hospitalis (strain KIN4/I / DSM 18386 / JCM 14125).